Reading from the N-terminus, the 821-residue chain is MELGGPATAGATDTAGQLFKDELSDKCQKLFLEFLEECKGKDGSNLYVSAAEELVRPERNTLVVNFTDIEYYNQQLATTIQEEYYRVYPHLCRAVRSFARQMGNIPANKEFYVAFSDFPARQKIRELSSAKIGTLLRISGQVVRTHPVHPELVSGTFLCMDCQSVVKDVEQQFRYTQPTICKNPVCANRRRFTLDTNKSRFVDFQKVRIQETQAELPRGAIPRSVEIILRAEAVETAMAGDRCDFTGTLIVVPDISALAAGDARMETGAKVTGGEGFNSEGVQGLKALGVRDLSYRLAFLACHVGATNPRFGGKDLREEDQTAESIKNQMTVQEWEKVFEMSQDKNLYHNLCTSLFPTIHGNDEIKRGVLLMLFGGVPKTTMEGTSLRGDINVCIVGDPSTSKSQFLKHVEEFSPRAVYTSGKASSAAGLTAAVVKDEESHEFVIEAGALMLADNGVCCIDEFDKMDLKDQVAIHEAMEQQTISITKAGVKATLNARTSILAAANPVGGRYERSKSLKHNVNLSAPIMSRFDLFFILVDECNEVTDYAIARRIVDLHARNEESIERVYSIEDIQRYLLFARQFQPKITKEAEEFIVEQYRRLRQRDGSGVAKSSWRITVRQLESLIRLSESMARMHCSDEVQPKHVKEAFRLLSKSIIRVDTPDVSFDQGEDEKNVEEEVNNANLNNGEEAMETNQDEPINDKPSTNAGLKMSFAEYKQISNLLVLHMQKMEEVEEECHLTTTDLVNWYLKEMEAEIETETELILKKRLIEKVIHRLINYDHILIELNKSELKTMDDSKETSEDAAEDRILVVNPNYMLED.

A C4-type zinc finger spans residues 159-186 (CMDCQSVVKDVEQQFRYTQPTICKNPVC). An MCM domain is found at 347 to 554 (LYHNLCTSLF…TDYAIARRIV (208 aa)). Position 397-404 (397-404 (GDPSTSKS)) interacts with ATP. Residues 529–532 (SRFD) carry the Arginine finger motif.

Belongs to the MCM family. In terms of assembly, component of the mcm2-7 complex (RLF-M). The complex forms a toroidal hexameric ring with the proposed subunit order mcm2-mcm6-mcm4-mcm7-mcm3-mcm5. The heterodimer of mmcm3/mcm5 interacts with mcm4, mmcm6, mcm7 and weakly with mcm2. Component of the CMG helicase complex, composed of the mcm2-7 complex, the GINS complex and cdc45.

It localises to the nucleus. The protein resides in the chromosome. The enzyme catalyses ATP + H2O = ADP + phosphate + H(+). Functionally, acts as a component of the mcm2-7 complex (mcm complex) which is the putative replicative helicase essential for 'once per cell cycle' DNA replication initiation and elongation in eukaryotic cells. The active ATPase sites in the mcm2-7 ring are formed through the interaction surfaces of two neighboring subunits such that a critical structure of a conserved arginine finger motif is provided in trans relative to the ATP-binding site of the Walker A box of the adjacent subunit. The six ATPase active sites, however, are likely to contribute differentially to the complex helicase activity. The existence of maternal and zygotic forms of mcm3 and mcm6 suggests that specific forms of mcm2-7 complexes may be used during different stages of development. This is Maternal DNA replication licensing factor mcm6 from Xenopus tropicalis (Western clawed frog).